The following is a 254-amino-acid chain: Transmembrane protein 269 (254 aa).

Helical transmembrane passes span 44 to 64 (IINA…FCSF), 69 to 89 (YCAS…GTMT), 113 to 135 (LASA…IYVL), 171 to 191 (LTKG…LFMI), and 210 to 230 (IVYI…TAFY).

Its subcellular location is the membrane. The polypeptide is Transmembrane protein 269 (Mus musculus (Mouse)).